The chain runs to 403 residues: Ribosomal RNA large subunit methyltransferase I (403 aa).

One can recognise a PUA domain in the interval 9 to 88 (YPRLVLSKGR…ESIDIAFFTR (80 aa)).

The protein belongs to the methyltransferase superfamily. RlmI family.

It localises to the cytoplasm. It catalyses the reaction cytidine(1962) in 23S rRNA + S-adenosyl-L-methionine = 5-methylcytidine(1962) in 23S rRNA + S-adenosyl-L-homocysteine + H(+). Specifically methylates the cytosine at position 1962 (m5C1962) of 23S rRNA. The chain is Ribosomal RNA large subunit methyltransferase I from Salmonella choleraesuis (strain SC-B67).